A 251-amino-acid chain; its full sequence is Diphthine synthase (251 aa).

S-adenosyl-L-methionine contacts are provided by residues leucine 9, aspartate 85, valine 88, 113–114, leucine 165, alanine 202, and histidine 227; that span reads SI.

It belongs to the diphthine synthase family. Homodimer.

It catalyses the reaction 2-[(3S)-amino-3-carboxypropyl]-L-histidyl-[translation elongation factor 2] + 3 S-adenosyl-L-methionine = diphthine-[translation elongation factor 2] + 3 S-adenosyl-L-homocysteine + 3 H(+). The protein operates within protein modification; peptidyl-diphthamide biosynthesis. Its function is as follows. S-adenosyl-L-methionine-dependent methyltransferase that catalyzes the trimethylation of the amino group of the modified target histidine residue in translation elongation factor 2 (EF-2), to form an intermediate called diphthine. The three successive methylation reactions represent the second step of diphthamide biosynthesis. This Methanosphaerula palustris (strain ATCC BAA-1556 / DSM 19958 / E1-9c) protein is Diphthine synthase.